We begin with the raw amino-acid sequence, 429 residues long: MKTSLETLKGLSRSLTIDLPIDIFNQKMDKILQKMALEVNIDGFRKGKVPISIVRKRFGNNANSDVINEIVNETLTDALAQVKLTPVAQPVITKVDSNSNKNFSYTVEFEVFPKIKIADFSELSIEQTKVNITKADEQKTLDGLKDRLTEYKAVQCKSKMGDRLSIDFKGLINGETFDGGEAKDFKIVLGKGSMIKGFEEGLIDVAYSSRVVLDLTFPKDYYMDKLASKDVTFEININEIASPKELKLDETFAKKFGEKNMNALRVSMKEQMRVEVDGRIGHLNKNAIFDKLTTANPFNVPQHSIDNEAQNLFKAMQDRMQHQGLSTQGEMPITAFNDEAQRRVKLGLLVNQISRDYKLSVSMKQIDEKLKEISKTYGENAQQMIDFYNQDPTRKSSIELLVVEKMVQDLILDKAQVTFKQKKFQEITQ.

In terms of domain architecture, PPIase FKBP-type spans glycine 161–leucine 246.

It belongs to the FKBP-type PPIase family. Tig subfamily.

The protein resides in the cytoplasm. The enzyme catalyses [protein]-peptidylproline (omega=180) = [protein]-peptidylproline (omega=0). Its function is as follows. Involved in protein export. Acts as a chaperone by maintaining the newly synthesized protein in an open conformation. Functions as a peptidyl-prolyl cis-trans isomerase. The polypeptide is Trigger factor (Vesicomyosocius okutanii subsp. Calyptogena okutanii (strain HA)).